The chain runs to 159 residues: ATP synthase subunit b (159 aa).

The chain crosses the membrane as a helical span at residues 7-27; the sequence is VIFMTIINFCILVAILKHFFW.

This sequence belongs to the ATPase B chain family. In terms of assembly, F-type ATPases have 2 components, F(1) - the catalytic core - and F(0) - the membrane proton channel. F(1) has five subunits: alpha(3), beta(3), gamma(1), delta(1), epsilon(1). F(0) has three main subunits: a(1), b(2) and c(10-14). The alpha and beta chains form an alternating ring which encloses part of the gamma chain. F(1) is attached to F(0) by a central stalk formed by the gamma and epsilon chains, while a peripheral stalk is formed by the delta and b chains.

It is found in the cell membrane. Functionally, f(1)F(0) ATP synthase produces ATP from ADP in the presence of a proton or sodium gradient. F-type ATPases consist of two structural domains, F(1) containing the extramembraneous catalytic core and F(0) containing the membrane proton channel, linked together by a central stalk and a peripheral stalk. During catalysis, ATP synthesis in the catalytic domain of F(1) is coupled via a rotary mechanism of the central stalk subunits to proton translocation. Its function is as follows. Component of the F(0) channel, it forms part of the peripheral stalk, linking F(1) to F(0). The protein is ATP synthase subunit b of Clostridium botulinum (strain Alaska E43 / Type E3).